We begin with the raw amino-acid sequence, 374 residues long: Alanine racemase (374 aa).

Lys-35 (proton acceptor; specific for D-alanine) is an active-site residue. Residue Lys-35 is modified to N6-(pyridoxal phosphate)lysine. Substrate is bound at residue Arg-130. The active-site Proton acceptor; specific for L-alanine is Tyr-261. Met-309 contacts substrate.

It belongs to the alanine racemase family. Pyridoxal 5'-phosphate serves as cofactor.

It carries out the reaction L-alanine = D-alanine. It participates in amino-acid biosynthesis; D-alanine biosynthesis; D-alanine from L-alanine: step 1/1. Functionally, catalyzes the interconversion of L-alanine and D-alanine. May also act on other amino acids. The chain is Alanine racemase (alr) from Albidiferax ferrireducens (strain ATCC BAA-621 / DSM 15236 / T118) (Rhodoferax ferrireducens).